The chain runs to 920 residues: Bifunctional aspartokinase/homoserine dehydrogenase 1, chloroplastic (920 aa).

The tract at residues 1-21 is disordered; the sequence is MRSLTVASRHPGAAFSTRRRP. The transit peptide at 1–92 directs the protein to the chloroplast; the sequence is MRSLTVASRH…EAIADLPKGD (92 aa). An aspartokinase region spans residues 93–341; sequence MWSVHKFGGT…VSEAVILSTL (249 aa). The tract at residues 342–566 is interface; that stretch reads SYQEAWEMSY…LSKTTLAVGI (225 aa). 2 ACT domains span residues 416 to 491 and 497 to 574; these read VEGT…VIHN and TVGL…LIGR. Positions 567–920 are homoserine dehydrogenase; it reads IGPGLIGRTL…RLSSYLGAPS (354 aa). NAD(+) contacts are provided by isoleucine 572 and alanine 601. NADP(+) is bound at residue isoleucine 572. Isoleucine 572 provides a ligand contact to NADPH. NADP(+) is bound by residues arginine 604, threonine 653, and lysine 677. Threonine 653 is an NAD(+) binding site. Positions 653 and 677 each coordinate NADPH. Na(+)-binding residues include glutamate 704, valine 707, alanine 709, and leucine 711. NADP(+)-binding residues include glycine 762 and glutamate 765. 2 residues coordinate L-homoserine: glutamate 765 and aspartate 776. The active-site Proton donor is lysine 780. Residue glycine 897 participates in NAD(+) binding. Glycine 897 contacts NADP(+). Position 897 (glycine 897) interacts with NADPH.

In the N-terminal section; belongs to the aspartokinase family. The protein in the C-terminal section; belongs to the homoserine dehydrogenase family. Homo- or heterodimer. It depends on a metal cation as a cofactor.

Its subcellular location is the plastid. It is found in the chloroplast. It catalyses the reaction L-homoserine + NADP(+) = L-aspartate 4-semialdehyde + NADPH + H(+). The catalysed reaction is L-homoserine + NAD(+) = L-aspartate 4-semialdehyde + NADH + H(+). The enzyme catalyses L-aspartate + ATP = 4-phospho-L-aspartate + ADP. The protein operates within amino-acid biosynthesis; L-lysine biosynthesis via DAP pathway; (S)-tetrahydrodipicolinate from L-aspartate: step 1/4. It participates in amino-acid biosynthesis; L-methionine biosynthesis via de novo pathway; L-homoserine from L-aspartate: step 1/3. It functions in the pathway amino-acid biosynthesis; L-methionine biosynthesis via de novo pathway; L-homoserine from L-aspartate: step 3/3. Its pathway is amino-acid biosynthesis; L-threonine biosynthesis; L-threonine from L-aspartate: step 1/5. The protein operates within amino-acid biosynthesis; L-threonine biosynthesis; L-threonine from L-aspartate: step 3/5. In terms of biological role, bifunctional aspartate kinase and homoserine dehydrogenase that catalyzes the first and the third steps toward the synthesis of lysine, methionine and threonine from aspartate. This Zea mays (Maize) protein is Bifunctional aspartokinase/homoserine dehydrogenase 1, chloroplastic (AKHSDH1).